A 63-amino-acid chain; its full sequence is Large ribosomal subunit protein bL32 (63 aa).

Positions 1–23 (MATPKAKVSKSRRDKRRAQFTAR) are disordered. Over residues 7–18 (KVSKSRRDKRRA) the composition is skewed to basic residues.

It belongs to the bacterial ribosomal protein bL32 family.

This chain is Large ribosomal subunit protein bL32, found in Chlorobium phaeobacteroides (strain BS1).